The sequence spans 446 residues: Tubulin beta-2 chain (446 aa).

8 residues coordinate GTP: glutamine 11, glutamate 69, serine 138, glycine 142, threonine 143, glycine 144, asparagine 204, and asparagine 226. Glutamate 69 is a binding site for Mg(2+). The tract at residues 426–446 (QEAGIDEEEEYEEEAPAEHEE) is disordered. Positions 429–440 (GIDEEEEYEEEA) are enriched in acidic residues.

Belongs to the tubulin family. As to quaternary structure, dimer of alpha and beta chains. A typical microtubule is a hollow water-filled tube with an outer diameter of 25 nm and an inner diameter of 15 nM. Alpha-beta heterodimers associate head-to-tail to form protofilaments running lengthwise along the microtubule wall with the beta-tubulin subunit facing the microtubule plus end conferring a structural polarity. Microtubules usually have 13 protofilaments but different protofilament numbers can be found in some organisms and specialized cells. It depends on Mg(2+) as a cofactor.

It localises to the cytoplasm. It is found in the cytoskeleton. Tubulin is the major constituent of microtubules, a cylinder consisting of laterally associated linear protofilaments composed of alpha- and beta-tubulin heterodimers. Microtubules grow by the addition of GTP-tubulin dimers to the microtubule end, where a stabilizing cap forms. Below the cap, tubulin dimers are in GDP-bound state, owing to GTPase activity of alpha-tubulin. The chain is Tubulin beta-2 chain from Hypocrea virens (Gliocladium virens).